A 260-amino-acid polypeptide reads, in one-letter code: MSLTKIKHINKPRHIAIIMDGNGRWAKNRGKLRIFGHKAGVESAKKAIKFAINNHLNALTLYAFSSENWKRPIQEVSDLMELFSSVLNNAIDSFKKNNIRLKIIGDISKFNLKLQKYIKKSEKITYKNNGLNLNIAANYGGRWDIIQGVKKIAKQVKKGIIYPDQINESNFCRFICMNELVPVDLVIRTGGEHRISNFLLWQIAYSELFFTDVLWPDFDHVIFSNAINSFAKRERRFGKINSKCSKIYLKTGDASENSIN.

Residue Asp20 is part of the active site. Mg(2+) is bound at residue Asp20. Substrate is bound by residues 21 to 24, Trp25, Arg33, His37, and 65 to 67; these read GNGR and SSE. The active-site Proton acceptor is Asn68. Residues Trp69, Arg71, and Arg188 each contribute to the substrate site. Residue His193 participates in Mg(2+) binding. 194 to 196 lines the substrate pocket; the sequence is RIS. Glu207 contacts Mg(2+).

It belongs to the UPP synthase family. In terms of assembly, homodimer. Mg(2+) is required as a cofactor.

It carries out the reaction 8 isopentenyl diphosphate + (2E,6E)-farnesyl diphosphate = di-trans,octa-cis-undecaprenyl diphosphate + 8 diphosphate. Functionally, catalyzes the sequential condensation of isopentenyl diphosphate (IPP) with (2E,6E)-farnesyl diphosphate (E,E-FPP) to yield (2Z,6Z,10Z,14Z,18Z,22Z,26Z,30Z,34E,38E)-undecaprenyl diphosphate (di-trans,octa-cis-UPP). UPP is the precursor of glycosyl carrier lipid in the biosynthesis of bacterial cell wall polysaccharide components such as peptidoglycan and lipopolysaccharide. This chain is Ditrans,polycis-undecaprenyl-diphosphate synthase ((2E,6E)-farnesyl-diphosphate specific), found in Wigglesworthia glossinidia brevipalpis.